The chain runs to 432 residues: Glutamate-1-semialdehyde 2,1-aminomutase (432 aa).

At lysine 270 the chain carries N6-(pyridoxal phosphate)lysine.

This sequence belongs to the class-III pyridoxal-phosphate-dependent aminotransferase family. HemL subfamily. Homodimer. The cofactor is pyridoxal 5'-phosphate.

It localises to the cytoplasm. It catalyses the reaction (S)-4-amino-5-oxopentanoate = 5-aminolevulinate. Its pathway is porphyrin-containing compound metabolism; protoporphyrin-IX biosynthesis; 5-aminolevulinate from L-glutamyl-tRNA(Glu): step 2/2. This Acinetobacter baumannii (strain ATCC 17978 / DSM 105126 / CIP 53.77 / LMG 1025 / NCDC KC755 / 5377) protein is Glutamate-1-semialdehyde 2,1-aminomutase.